The chain runs to 115 residues: MVRVKRGNVAAKRRKKILKLAKGFKGAHSRLFRTANGQVMKALVYSYVGRKRRKRDFKRLWICRVNAASRSHGLNYSKLRNLMKQASLNINLKMLAQLVLFDKKAFSQIIDLVNK.

It belongs to the bacterial ribosomal protein bL20 family.

It is found in the plastid. Its subcellular location is the chloroplast. Functionally, binds directly to 23S ribosomal RNA and is necessary for the in vitro assembly process of the 50S ribosomal subunit. It is not involved in the protein synthesizing functions of that subunit. In Emiliania huxleyi (Coccolithophore), this protein is Large ribosomal subunit protein bL20c.